A 919-amino-acid polypeptide reads, in one-letter code: Translation initiation factor IF-2 (919 aa).

Residues 93–107 (MGKALPEEVPEKIAP) are compositionally biased toward basic and acidic residues. 2 disordered regions span residues 93-145 (MGKA…PAEP) and 158-279 (KIQP…RKGE). Positions 136-145 (LAPPEKPAEP) are enriched in pro residues. Positions 158 to 171 (KIQPPEKFAEEPLK) are enriched in basic and acidic residues. Positions 172-193 (KPAVIEPEKAAAAPKAVPGEAK) are enriched in low complexity. Basic and acidic residues-rich tracts occupy residues 194 to 203 (PLPRTERVQE) and 256 to 279 (GAPK…RKGE). The 170-residue stretch at 420–589 (PRAPVVTIMG…LLQADVLELK (170 aa)) folds into the tr-type G domain. The tract at residues 429–436 (GHVDHGKT) is G1. 429–436 (GHVDHGKT) contacts GTP. Positions 454–458 (GITQA) are G2. The tract at residues 475 to 478 (DTPG) is G3. GTP-binding positions include 475 to 479 (DTPGH) and 529 to 532 (NKID). The tract at residues 529–532 (NKID) is G4. Positions 565 to 567 (SAK) are G5.

The protein belongs to the TRAFAC class translation factor GTPase superfamily. Classic translation factor GTPase family. IF-2 subfamily.

The protein resides in the cytoplasm. One of the essential components for the initiation of protein synthesis. Protects formylmethionyl-tRNA from spontaneous hydrolysis and promotes its binding to the 30S ribosomal subunits. Also involved in the hydrolysis of GTP during the formation of the 70S ribosomal complex. The chain is Translation initiation factor IF-2 from Syntrophus aciditrophicus (strain SB).